Reading from the N-terminus, the 394-residue chain is Anthocyanidin 3-O-glucosyltransferase 6 (394 aa).

Asp-37 serves as the catalytic Charge relay. UDP-alpha-D-glucose-binding residues include Thr-59, Ala-267, Gln-269, His-284, Trp-287, Asn-288, Ser-289, and Glu-292. Ala-307 contacts an anthocyanidin. UDP-alpha-D-glucose contacts are provided by Glu-308 and Gln-309.

Belongs to the UDP-glycosyltransferase family. In terms of tissue distribution, expressed in cotyledons and leaves.

It catalyses the reaction an anthocyanidin + UDP-alpha-D-glucose + H(+) = an anthocyanidin 3-O-beta-D-glucoside + UDP. The protein operates within pigment biosynthesis; anthocyanin biosynthesis. Its function is as follows. In the presence of other necessary color factors, this glycosylation reaction allows the accumulation of anthocyanin pigments. May be involved in glycosylation of unstable cyanohydrins to produce stable cyanoglucosides. This Manihot esculenta (Cassava) protein is Anthocyanidin 3-O-glucosyltransferase 6 (GT6).